Here is a 61-residue protein sequence, read N- to C-terminus: Large ribosomal subunit protein bL28 (61 aa).

The disordered stretch occupies residues 1-27; the sequence is MAKDFVTGKKTTFGNTRSHALNSSSRS. Residues 9–27 show a composition bias toward polar residues; the sequence is KKTTFGNTRSHALNSSSRS.

It belongs to the bacterial ribosomal protein bL28 family.

The polypeptide is Large ribosomal subunit protein bL28 (Lactobacillus delbrueckii subsp. bulgaricus (strain ATCC 11842 / DSM 20081 / BCRC 10696 / JCM 1002 / NBRC 13953 / NCIMB 11778 / NCTC 12712 / WDCM 00102 / Lb 14)).